We begin with the raw amino-acid sequence, 638 residues long: DNA-directed RNA polymerase I subunit RPA1 (638 aa).

Positions 297–317 (EYDEEDDESSGESEVREGDEE) are enriched in acidic residues. Residues 297-321 (EYDEEDDESSGESEVREGDEEQEKK) are disordered.

The protein belongs to the RNA polymerase beta' chain family. Each class of RNA polymerase is assembled from 9 to 14 different polypeptides. This subunit is the largest component of RNA polymerase I.

The protein resides in the nucleus. It catalyses the reaction RNA(n) + a ribonucleoside 5'-triphosphate = RNA(n+1) + diphosphate. Functionally, DNA-dependent RNA polymerase catalyzes the transcription of DNA into RNA using the four ribonucleoside triphosphates as substrates. RNA polymerase I is essentially used to transcribe ribosomal DNA units. The polypeptide is DNA-directed RNA polymerase I subunit RPA1 (RPA1) (Euplotoides octocarinatus (Freshwater ciliate)).